The primary structure comprises 345 residues: Phosphoribosylformylglycinamidine cyclo-ligase (345 aa).

This sequence belongs to the AIR synthase family.

The protein localises to the cytoplasm. It carries out the reaction 2-formamido-N(1)-(5-O-phospho-beta-D-ribosyl)acetamidine + ATP = 5-amino-1-(5-phospho-beta-D-ribosyl)imidazole + ADP + phosphate + H(+). Its pathway is purine metabolism; IMP biosynthesis via de novo pathway; 5-amino-1-(5-phospho-D-ribosyl)imidazole from N(2)-formyl-N(1)-(5-phospho-D-ribosyl)glycinamide: step 2/2. The polypeptide is Phosphoribosylformylglycinamidine cyclo-ligase (Histophilus somni (strain 129Pt) (Haemophilus somnus)).